We begin with the raw amino-acid sequence, 375 residues long: Chaperone protein DnaJ (375 aa).

The J domain occupies 4 to 68 (DYYEILGVSR…ETRARYDRFG (65 aa)). The CR-type zinc-finger motif lies at 135–217 (GGEKEIRISH…CDGKGANQVT (83 aa)). Zn(2+)-binding residues include Cys148, Cys151, Cys165, Cys168, Cys191, Cys194, Cys205, and Cys208. CXXCXGXG motif repeat units lie at residues 148–155 (CEVCSGSG), 165–172 (CSTCSGSG), 191–198 (CPTCNGTG), and 205–212 (CDACDGKG).

The protein belongs to the DnaJ family. Homodimer. The cofactor is Zn(2+).

The protein localises to the cytoplasm. Its function is as follows. Participates actively in the response to hyperosmotic and heat shock by preventing the aggregation of stress-denatured proteins and by disaggregating proteins, also in an autonomous, DnaK-independent fashion. Unfolded proteins bind initially to DnaJ; upon interaction with the DnaJ-bound protein, DnaK hydrolyzes its bound ATP, resulting in the formation of a stable complex. GrpE releases ADP from DnaK; ATP binding to DnaK triggers the release of the substrate protein, thus completing the reaction cycle. Several rounds of ATP-dependent interactions between DnaJ, DnaK and GrpE are required for fully efficient folding. Also involved, together with DnaK and GrpE, in the DNA replication of plasmids through activation of initiation proteins. This Nostoc punctiforme (strain ATCC 29133 / PCC 73102) protein is Chaperone protein DnaJ.